Here is a 268-residue protein sequence, read N- to C-terminus: Speedy protein E4A (268 aa).

2 disordered regions span residues 1–26 and 43–97; these read MGEG…LGFV and LCSE…LDSE. Polar residues predominate over residues 43 to 52; sequence LCSEEQSPQP. The interval 134–265 is speedy/Ringo box; Required for CDK-binding; sequence PEHHKVFTKL…DLWVWARDRT (132 aa).

The protein belongs to the Speedy/Ringo family. In terms of assembly, interacts with CDK1. Does not interact with CDK2 in vivo. As to expression, testis-specific.

The protein localises to the nucleus. In terms of biological role, promotes progression through the cell cycle via binding and activation of CDK1. In Mus musculus (Mouse), this protein is Speedy protein E4A.